The sequence spans 231 residues: DNA damage response protein C (231 aa).

As to quaternary structure, homodimer.

It localises to the cytoplasm. The protein localises to the nucleoid. Its function is as follows. Appears to contribute to D.radiodurans capacity to survive exposure to ionizing radiation. Likely functions as a DNA damage-induced nucleoid-associated protein (NAP) that contributes to the enhanced level of nucleoid compaction after irradiation by bridging DNA duplexes, thereby limiting the dispersion of the fragmented genome immediately after irradiation to facilitate subsequent DNA repair. In vitro, binds both ssDNA and dsDNA, and is able to compact circular DNA, circularize linear DNA, anneal complementary DNA strands and protect DNA from nucleases. This Deinococcus radiodurans (strain ATCC 13939 / DSM 20539 / JCM 16871 / CCUG 27074 / LMG 4051 / NBRC 15346 / NCIMB 9279 / VKM B-1422 / R1) protein is DNA damage response protein C.